The sequence spans 493 residues: Xaa-Pro dipeptidase (493 aa).

N-acetylalanine is present on Ala-2. A Phosphoserine modification is found at Ser-167. Residue His-255 participates in a dipeptide binding. Residues Asp-276, Asp-287, and His-370 each coordinate Mn(2+). Asp-287 is a binding site for a dipeptide. His-377 and Arg-398 together coordinate a dipeptide. Positions 412 and 452 each coordinate Mn(2+).

The protein belongs to the peptidase M24B family. Eukaryotic-type prolidase subfamily. In terms of assembly, homodimer. It depends on Mn(2+) as a cofactor.

It catalyses the reaction Xaa-L-Pro dipeptide + H2O = an L-alpha-amino acid + L-proline. In terms of biological role, dipeptidase that catalyzes the hydrolysis of dipeptides with a prolyl (Xaa-Pro) or hydroxyprolyl residue in the C-terminal position. The preferred dipeptide substrate is Gly-Pro, but other Xaa-Pro dipeptides, such as Ala-Pro, Met-Pro, Phe-Pro, Val-Pro and Leu-Pro, can be cleaved. Plays an important role in collagen metabolism because the high level of iminoacids in collagen. This chain is Xaa-Pro dipeptidase (Pepd), found in Mus musculus (Mouse).